Reading from the N-terminus, the 346-residue chain is UDP-3-O-acylglucosamine N-acyltransferase (346 aa).

The Proton acceptor role is filled by His253.

The protein belongs to the transferase hexapeptide repeat family. LpxD subfamily. As to quaternary structure, homotrimer.

The catalysed reaction is a UDP-3-O-[(3R)-3-hydroxyacyl]-alpha-D-glucosamine + a (3R)-hydroxyacyl-[ACP] = a UDP-2-N,3-O-bis[(3R)-3-hydroxyacyl]-alpha-D-glucosamine + holo-[ACP] + H(+). The protein operates within bacterial outer membrane biogenesis; LPS lipid A biosynthesis. Functionally, catalyzes the N-acylation of UDP-3-O-acylglucosamine using 3-hydroxyacyl-ACP as the acyl donor. Is involved in the biosynthesis of lipid A, a phosphorylated glycolipid that anchors the lipopolysaccharide to the outer membrane of the cell. The chain is UDP-3-O-acylglucosamine N-acyltransferase from Rickettsia akari (strain Hartford).